The primary structure comprises 194 residues: MDRIAIVDLGIGNLANVKKALKGYITSDPYEIEKADKIVLPGVGNFGAVVDKLAPIKDIIIEGINEGKPFLGICLGMQLLFEESEESPGKEGLGIFKGKVVKLKNVRTPHIGWNQVWIKKECKLFEGLKNGSYFYFVHSYHAVPQDPDIIATTTDYENAEFVSSVCFENIFGVQFHPEKSSKNGLILLRNFRRL.

A Glutamine amidotransferase type-1 domain is found at 3–194 (RIAIVDLGIG…LILLRNFRRL (192 aa)). Cys74 acts as the Nucleophile in catalysis. Active-site residues include His176 and Glu178.

As to quaternary structure, heterodimer of HisH and HisF.

It is found in the cytoplasm. The catalysed reaction is 5-[(5-phospho-1-deoxy-D-ribulos-1-ylimino)methylamino]-1-(5-phospho-beta-D-ribosyl)imidazole-4-carboxamide + L-glutamine = D-erythro-1-(imidazol-4-yl)glycerol 3-phosphate + 5-amino-1-(5-phospho-beta-D-ribosyl)imidazole-4-carboxamide + L-glutamate + H(+). The enzyme catalyses L-glutamine + H2O = L-glutamate + NH4(+). It participates in amino-acid biosynthesis; L-histidine biosynthesis; L-histidine from 5-phospho-alpha-D-ribose 1-diphosphate: step 5/9. In terms of biological role, IGPS catalyzes the conversion of PRFAR and glutamine to IGP, AICAR and glutamate. The HisH subunit catalyzes the hydrolysis of glutamine to glutamate and ammonia as part of the synthesis of IGP and AICAR. The resulting ammonia molecule is channeled to the active site of HisF. The chain is Imidazole glycerol phosphate synthase subunit HisH from Pyrococcus furiosus (strain ATCC 43587 / DSM 3638 / JCM 8422 / Vc1).